The following is a 644-amino-acid chain: Leucine-rich repeat protein soc-2 homolog (644 aa).

Residues 1–19 (MNLCSSGATASTTSLSSTG) are compositionally biased toward low complexity. Disordered regions lie at residues 1–60 (MNLC…APTL) and 82–150 (NSPA…IQAD). 2 stretches are compositionally biased toward gly residues: residues 26 to 50 (GVPG…GGKA) and 87 to 96 (GAGGASGFTG). Residues 99 to 117 (QQPTGSNGHSHLHNENNAN) show a composition bias toward polar residues. 20 LRR repeats span residues 164-185 (GIKR…VKEC), 187-208 (HLTE…IGCL), 210-231 (SLRN…LQNC), 233-254 (QLKV…IYRL), 256-277 (SLTT…LRQL), 279-300 (NLTM…IGAL), 302-323 (NLTT…IGNC), 325-346 (NLSA…IGNL), 348-370 (SLVR…KNCK), 371-392 (SMDE…MLAS), 395-416 (GLTT…GPAQ), 419-440 (NVYS…IFSR), 443-464 (GLTK…IGTW), 466-487 (NMVE…IMNL), 489-510 (NLEI…IGNL), 512-533 (RLRI…IGLL), 535-556 (ELQR…IGHL), 558-579 (NLTH…IGSL), 581-603 (SLEN…LALC), and 605-626 (NLKY…IQAG).

The protein belongs to the SHOC2 family.

Its function is as follows. Acts as a Ras effector and participates in MAPK pathway activation. Probably acts as a regulatory subunit of protein phosphatase that specifically dephosphorylates Raf kinase and stimulate Raf activity at specialized signaling complexes upon Ras activation. The sequence is that of Leucine-rich repeat protein soc-2 homolog (Sur-8) from Drosophila erecta (Fruit fly).